A 765-amino-acid polypeptide reads, in one-letter code: Palmitoyltransferase ZDHHC8 (765 aa).

Residues 1–13 (MPRSPGTRLKPAK) are Cytoplasmic-facing. Residues 14 to 34 (YIPVATAAALLVGSSTLFFVF) form a helical membrane-spanning segment. Over 35-52 (TCPWLTRAVSPAVPVYNG) the chain is Lumenal. A helical transmembrane segment spans residues 53–73 (IIFLFVLANFSMATFMDPGVF). Over 74–148 (PRADEDEDKE…NCIGRRNYRY (75 aa)) the chain is Cytoplasmic. The region spanning 104-154 (KWCATCHFYRPPRCSHCSVCDNCVEDFDHHCPWVNNCIGRRNYRYFFLFLL) is the DHHC domain. The active-site S-palmitoyl cysteine intermediate is the cysteine 134. A helical transmembrane segment spans residues 149–169 (FFLFLLSLSAHMVGVVAFGLV). Over 170 to 190 (YVLNHAEGLGAAHTTITMAVM) the chain is Lumenal. A helical membrane pass occupies residues 191-211 (CVAGLFFIPVIGLTGFHVVLV). Residues 212-765 (TRGRTTNEQV…VGGTTYEISV (554 aa)) are Cytoplasmic-facing. Positions 293-352 (GLGRSKSKGSLDRLDEKPLDLGPPLPPKIEAGTFSSDLQTPRPGSAESALSVQRTSPPTP) are disordered. Residues 301-311 (GSLDRLDEKPL) are compositionally biased toward basic and acidic residues. Residue serine 337 is modified to Phosphoserine. The residue at position 441 (arginine 441) is an Omega-N-methylarginine. The interval 509 to 540 (LHPGATGDPPRPLPRSFSPVLGPRPREPSPVR) is disordered. Serine 606, serine 627, serine 675, serine 682, serine 725, and serine 743 each carry phosphoserine. The tract at residues 613–747 (GPGFGGARNP…PGPSASPTRH (135 aa)) is disordered. Positions 622–653 (PALQTSLSSLSSSVSRAPRTSSSSLQADQASS) are enriched in low complexity.

Belongs to the DHHC palmitoyltransferase family. ERF2/ZDHHC9 subfamily. In terms of tissue distribution, widely expressed.

It is found in the golgi apparatus membrane. Its subcellular location is the mitochondrion membrane. The catalysed reaction is L-cysteinyl-[protein] + hexadecanoyl-CoA = S-hexadecanoyl-L-cysteinyl-[protein] + CoA. In terms of biological role, palmitoyltransferase that catalyzes the addition of palmitate onto various protein substrates and therefore functions in several unrelated biological processes. Through the palmitoylation of ABCA1 regulates the localization of the transporter to the plasma membrane and thereby regulates its function in cholesterol and phospholipid efflux. Could also pamitoylate the D(2) dopamine receptor DRD2 and regulate its stability and localization to the plasma membrane. Could also play a role in glutamatergic transmission. (Microbial infection) Able to palmitoylate SARS coronavirus-2/SARS-CoV-2 spike protein following its synthesis in the endoplasmic reticulum (ER). In the infected cell, promotes spike biogenesis by protecting it from premature ER degradation, increases half-life and controls the lipid organization of its immediate membrane environment. Once the virus has formed, spike palmitoylation controls fusion with the target cell. The chain is Palmitoyltransferase ZDHHC8 from Homo sapiens (Human).